The chain runs to 927 residues: Alpha-catenin-like protein hmp-1 (927 aa).

2 coiled-coil regions span residues 319–354 (TRENRKQKIVAECNNLRQALQELLTEYEKSTGRRDD) and 672–696 (QENQQNLMRRLPEEEKKKIQAQIDI). Residues 901 to 927 (RNEIETGRDSDDEELDRRHQQRINGRL) are disordered.

Belongs to the vinculin/alpha-catenin family. Component of a core catenin-cadherin complex consisting of hmr-1, hmp-1 and hmp-2; the complex localizes to adherens junctions. May interact with hmp-2. In terms of tissue distribution, epidermal cells.

The protein resides in the cell junction. Its subcellular location is the adherens junction. The protein localises to the cytoplasm. Functionally, required for cell migration during body enclosure and cell shape changes during body elongation. Required for proper localization of other junctional components, such as pac-1. The chain is Alpha-catenin-like protein hmp-1 (hmp-1) from Caenorhabditis elegans.